The sequence spans 163 residues: uncharacterized protein (163 aa).

This is an uncharacterized protein from Schizosaccharomyces pombe (strain 972 / ATCC 24843) (Fission yeast).